Here is a 764-residue protein sequence, read N- to C-terminus: Chloride anion exchanger (764 aa).

Residues 1–76 (MIEPFGNQYI…YRLKEWLLSD (76 aa)) lie on the Cytoplasmic side of the membrane. Residues 77–97 (IVSGISTGIVAVLQGLAFALL) traverse the membrane as a helical segment. Residues 98–99 (VD) are Extracellular-facing. Residues 100–120 (IPPVYGLYASFFPAIIYLFFG) traverse the membrane as a helical segment. At 121–124 (TSRH) the chain is on the cytoplasmic side. Residues 125–145 (ISVGPFPILSMMVGLAVSGAV) traverse the membrane as a helical segment. At 146–175 (SKAVPDRNATTLGLPNNSNNSSLLDDERVR) the chain is on the extracellular side. 3 N-linked (GlcNAc...) asparagine glycosylation sites follow: Asn153, Asn161, and Asn165. Residues 176–196 (VAAAASVTVLSGIIQLAFGIL) form a helical membrane-spanning segment. Residue Arg197 is a topological domain, cytoplasmic. The chain crosses the membrane as a helical span at residues 198–218 (IGFVVIYLSESLISGFTTAAA). The Extracellular segment spans residues 219–257 (VHVLVSQLKFIFQLTVPSHTDPVSIFKVLYSVFSQIEKT). The chain crosses the membrane as a helical span at residues 258–278 (NIADLVTALIVLLVVSIVKEI). Topologically, residues 279 to 342 (NQRFKDKLPV…VETFQNTVGD (64 aa)) are cytoplasmic. A helical transmembrane segment spans residues 343-363 (CFGIAMVAFAVAFSVASVYSL). The Extracellular portion of the chain corresponds to 364-374 (KYDYPLDGNQE). Residues 375 to 395 (LIALGLGNIVCGVFRGFAGST) traverse the membrane as a helical segment. The Cytoplasmic segment spans residues 396-411 (ALSRSAVQESTGGKTQ). A helical transmembrane segment spans residues 412 to 432 (IAGLIGAIIVLIVVLAIGFLL). Residues 433-469 (APLQKSVLAALALGNLKGMLMQFAEIGRLWRKDKYDC) are Extracellular-facing. The chain crosses the membrane as a helical span at residues 470–490 (LIWIMTFIFTIVLGLGLGLAA). Over 491–701 (SVAFQLLTIV…EKLNRYEFFD (211 aa)) the chain is Cytoplasmic. Residues 525-720 (DYYDMYEPEG…LTIHDAVLHI (196 aa)) form the STAS domain. The short motif at 761–764 (ETKF) is the PDZ-binding element.

The protein belongs to the SLC26A/SulP transporter (TC 2.A.53) family. In terms of assembly, interacts with CFTR, SLC26A6 and NHERF1. Interacts with PDZK1. Interacts (via PDZ-binding motif) with NHERF4 (via the third PDZ domain); interaction leads to decreased expression of SLC26A3 on the cell membrane resulting in its reduced exchanger activity. In terms of processing, N-glycosylation is required for efficient cell surface expression, and protection from proteolytic degradation. In terms of tissue distribution, expressed in the colon. Expression is significantly decreased in adenomas (polyps) and adenocarcinomas of the colon.

It is found in the apical cell membrane. The protein resides in the membrane. Its subcellular location is the cell membrane. The enzyme catalyses hydrogencarbonate(in) + 2 chloride(out) = hydrogencarbonate(out) + 2 chloride(in). Inhibited by acidic pH. Its function is as follows. Mediates chloride-bicarbonate exchange with a chloride bicarbonate stoichiometry of 2:1 in the intestinal epithelia. Plays a role in the chloride and bicarbonate homeostasis during sperm epididymal maturation and capacitation. The sequence is that of Chloride anion exchanger (SLC26A3) from Homo sapiens (Human).